A 1450-amino-acid polypeptide reads, in one-letter code: Inactive serine/threonine-protein kinase TEX14 (1450 aa).

ANK repeat units follow at residues 27–54, 55–84, and 88–117; these read LHEYAKQGNCVKLKKILKKGVCVDAVNT, QGQSALFVAALLGHVKLVDVLVDYGSDPNH, and DGSTPVHAAAFSGNQWILSKLLTAGGDLRL. Ser175 and Ser186 each carry phosphoserine. The region spanning 199 to 512 is the Protein kinase domain; it reads IISAQNIYSF…ILKNDLKEFI (314 aa). Residues 205–213 and Lys267 each bind ATP; that span reads IYSFGFGKF. At Ser431 the chain carries Phosphoserine; by PLK1. Residues Ser561 and Ser662 each carry the phosphoserine modification. Residues 700–720 are disordered; it reads SDSLGSLNLPEPTREAKGKTS. A GPPX3Y motif is present at residues 791-797; sequence GPPSLAY. Disordered stretches follow at residues 852–906, 947–977, 992–1012, and 1035–1062; these read VSEE…MASV, PPWNPQSSAPFESKVENESTPLPRPPIRGPE, DEPKGNTKFGKMDNSDCDKNK, and QPEQNEASQASCDTSVGTEKFYSTSSPI. 2 stretches are compositionally biased toward polar residues: residues 875 to 886 and 894 to 906; these read KQSTGEQLPSTQ and KNTNQNSRSMASV. The short motif at 889–897 is the D-box element; sequence RESLEKNTN. Residues 992-1011 show a composition bias toward basic and acidic residues; it reads DEPKGNTKFGKMDNSDCDKN. The segment covering 1038–1061 has biased composition (polar residues); sequence QNEASQASCDTSVGTEKFYSTSSP. Phosphoserine occurs at positions 1060 and 1221. 2 disordered regions span residues 1261-1282 and 1300-1418; these read THATKRKSLPRELAEATSQQHL and KQQQ…SLGT. Polar residues-rich tracts occupy residues 1300 to 1311 and 1332 to 1344; these read KQQQVSSLASHE and TNSSKDSSFLSSR. Phosphoserine is present on residues Ser1357 and Ser1358. 2 stretches are compositionally biased toward basic and acidic residues: residues 1383-1397 and 1404-1413; these read STREKKNKDQDVVEQ and SIKPERRESD. Phosphoserine is present on residues Ser1412 and Ser1449.

It belongs to the protein kinase superfamily. Interacts with KIF23 and RBM44. Interacts with CEP55; inhibiting interaction between CEP55 and PDCD6IP/ALIX and TSG101. Post-translationally, phosphorylated on Thr residues by CDK1 during early phases of mitosis, promoting the interaction with PLK1 and recruitment to kinetochores. Phosphorylated on Ser-431 by PLK1 during late prometaphase promotes the rapid depletion from kinetochores and its subsequent degradation by the APC/C complex. As to expression, detected in testis and spermatogonia. Not detectable in the other tissues tested.

It is found in the cytoplasm. The protein localises to the midbody. Its subcellular location is the chromosome. It localises to the centromere. The protein resides in the kinetochore. Required both for the formation of intercellular bridges during meiosis and for kinetochore-microtubule attachment during mitosis. Intercellular bridges are evolutionarily conserved structures that connect differentiating germ cells and are required for spermatogenesis and male fertility. Acts by promoting the conversion of midbodies into intercellular bridges via its interaction with CEP55: interaction with CEP55 inhibits the interaction between CEP55 and PDCD6IP/ALIX and TSG101, blocking cell abscission and leading to transform midbodies into intercellular bridges. Also plays a role during mitosis: recruited to kinetochores by PLK1 during early mitosis and regulates the maturation of the outer kinetochores and microtubule attachment. Has no protein kinase activity in vitro. The polypeptide is Inactive serine/threonine-protein kinase TEX14 (Tex14) (Mus musculus (Mouse)).